Reading from the N-terminus, the 94-residue chain is Co-chaperonin GroES (94 aa).

Belongs to the GroES chaperonin family. In terms of assembly, heptamer of 7 subunits arranged in a ring. Interacts with the chaperonin GroEL.

It is found in the cytoplasm. In terms of biological role, together with the chaperonin GroEL, plays an essential role in assisting protein folding. The GroEL-GroES system forms a nano-cage that allows encapsulation of the non-native substrate proteins and provides a physical environment optimized to promote and accelerate protein folding. GroES binds to the apical surface of the GroEL ring, thereby capping the opening of the GroEL channel. In Bacillus mycoides (strain KBAB4) (Bacillus weihenstephanensis), this protein is Co-chaperonin GroES.